The following is a 907-amino-acid chain: HMG box transcription factor BBX (907 aa).

Positions 1 to 19 (MKGSNRNKDHSTEGEGDGK) are enriched in basic and acidic residues. 4 disordered regions span residues 1–24 (MKGSNRNKDHSTEGEGDGKRPKRK), 37–80 (LDFS…EQRA), 152–185 (TTNKPVKSPTPTVNPRKKLWAFPPDSSRDLPTPK), and 220–242 (TPEASSGTCRPDISESPELRQKS). Composition is skewed to acidic residues over residues 39–52 (FSEEEEEDEEEEDI) and 61–75 (DGLEQDVAETEDDES). A DNA-binding region (HMG box) is located at residues 80–148 (ARRPMNAFLL…AFMKANPGYR (69 aa)). A compositionally biased stretch (polar residues) spans 152–164 (TTNKPVKSPTPTV). S242 carries the phosphoserine modification. K384 participates in a covalent cross-link: Glycyl lysine isopeptide (Lys-Gly) (interchain with G-Cter in SUMO2). 3 disordered regions span residues 435–483 (IIED…DIES), 495–612 (DWGV…SERS), and 628–672 (TSLR…KKFK). Residues 447–457 (KIKKKKKKNKL) are compositionally biased toward basic residues. S476 and S483 each carry phosphoserine. 2 stretches are compositionally biased toward basic and acidic residues: residues 496–506 (WGVDKLGETPR) and 534–550 (KKVSKEKCSDITKESRP). K571 is covalently cross-linked (Glycyl lysine isopeptide (Lys-Gly) (interchain with G-Cter in SUMO2)). Basic and acidic residues predominate over residues 591–612 (KPEDSDCHRKTETCGSRKSERS). Over residues 656-668 (ESWTFNQSGTSGS) the composition is skewed to polar residues. K693 is covalently cross-linked (Glycyl lysine isopeptide (Lys-Gly) (interchain with G-Cter in SUMO2)). A Phosphoserine modification is found at S701. Disordered stretches follow at residues 708 to 736 (KCVSTPRKKKKTGNMSSESTKTSKGSGDK), 769 to 854 (NALS…SSTP), and 877 to 907 (VHRGQRSTPLTHDGQPKEMPQAPVLISCADQ). The span at 723–732 (SSESTKTSKG) shows a compositional bias: low complexity. The segment covering 772–783 (SIPNTPEPTTMQ) has biased composition (polar residues). At S789 the chain carries Phosphoserine. The segment covering 790–801 (QKRKARKTKITH) has biased composition (basic residues). Phosphoserine is present on S811.

It is found in the nucleus. In terms of biological role, transcription factor that is necessary for cell cycle progression from G1 to S phase. In Mus musculus (Mouse), this protein is HMG box transcription factor BBX (Bbx).